The following is a 485-amino-acid chain: Cysteine--tRNA ligase (485 aa).

Cys-28 provides a ligand contact to Zn(2+). The 'HIGH' region signature appears at 30–40; sequence MTVYDYCHLGH. Zn(2+) is bound by residues Cys-212, His-237, and Glu-241. Residues 269-273 carry the 'KMSKS' region motif; sequence KMSKS. Lys-272 contacts ATP.

The protein belongs to the class-I aminoacyl-tRNA synthetase family. As to quaternary structure, monomer. The cofactor is Zn(2+).

The protein resides in the cytoplasm. It carries out the reaction tRNA(Cys) + L-cysteine + ATP = L-cysteinyl-tRNA(Cys) + AMP + diphosphate. The polypeptide is Cysteine--tRNA ligase (Bordetella bronchiseptica (strain ATCC BAA-588 / NCTC 13252 / RB50) (Alcaligenes bronchisepticus)).